The chain runs to 428 residues: Histidinol dehydrogenase (428 aa).

The NAD(+) site is built by Tyr-126, Gln-188, and Asn-211. The substrate site is built by Ser-234, Gln-256, and His-259. Zn(2+) is bound by residues Gln-256 and His-259. Catalysis depends on proton acceptor residues Glu-324 and His-325. Positions 325, 358, 412, and 417 each coordinate substrate. Asp-358 contacts Zn(2+). His-417 lines the Zn(2+) pocket.

The protein belongs to the histidinol dehydrogenase family. The cofactor is Zn(2+).

The catalysed reaction is L-histidinol + 2 NAD(+) + H2O = L-histidine + 2 NADH + 3 H(+). The protein operates within amino-acid biosynthesis; L-histidine biosynthesis; L-histidine from 5-phospho-alpha-D-ribose 1-diphosphate: step 9/9. In terms of biological role, catalyzes the sequential NAD-dependent oxidations of L-histidinol to L-histidinaldehyde and then to L-histidine. The protein is Histidinol dehydrogenase of Chlorobaculum tepidum (strain ATCC 49652 / DSM 12025 / NBRC 103806 / TLS) (Chlorobium tepidum).